A 570-amino-acid chain; its full sequence is Urease subunit alpha (570 aa).

In terms of domain architecture, Urease spans 131–570; that stretch reads GGFDSHIHFI…LPMAQRYFMY (440 aa). Ni(2+) contacts are provided by His136, His138, and Lys219. Residue Lys219 is modified to N6-carboxylysine. A substrate-binding site is contributed by His221. Residues His248 and His274 each coordinate Ni(2+). His322 serves as the catalytic Proton donor. Residue Asp362 participates in Ni(2+) binding.

This sequence belongs to the metallo-dependent hydrolases superfamily. Urease alpha subunit family. Heterotrimer of UreA (gamma), UreB (beta) and UreC (alpha) subunits. Three heterotrimers associate to form the active enzyme. It depends on Ni cation as a cofactor. Post-translationally, carboxylation allows a single lysine to coordinate two nickel ions.

The protein localises to the cytoplasm. It catalyses the reaction urea + 2 H2O + H(+) = hydrogencarbonate + 2 NH4(+). Its pathway is nitrogen metabolism; urea degradation; CO(2) and NH(3) from urea (urease route): step 1/1. This Rhodopseudomonas palustris (strain HaA2) protein is Urease subunit alpha.